We begin with the raw amino-acid sequence, 432 residues long: Probable pectate lyase 22 (432 aa).

An N-terminal signal peptide occupies residues 1-45; sequence MFRPNSLLIPSNLSTTKSQRNTMLNSSYLSFALIFFCCILFSALA. Asn-65 carries an N-linked (GlcNAc...) asparagine glycan. 3 residues coordinate Ca(2+): Asp-228, Asp-252, and Asp-256. The active site involves Arg-308.

Belongs to the polysaccharide lyase 1 family. It depends on Ca(2+) as a cofactor.

The catalysed reaction is Eliminative cleavage of (1-&gt;4)-alpha-D-galacturonan to give oligosaccharides with 4-deoxy-alpha-D-galact-4-enuronosyl groups at their non-reducing ends.. It functions in the pathway glycan metabolism; pectin degradation; 2-dehydro-3-deoxy-D-gluconate from pectin: step 2/5. The polypeptide is Probable pectate lyase 22 (Arabidopsis thaliana (Mouse-ear cress)).